Reading from the N-terminus, the 258-residue chain is Acyl-[acyl-carrier-protein]--UDP-N-acetylglucosamine O-acyltransferase (258 aa).

The protein belongs to the transferase hexapeptide repeat family. LpxA subfamily. In terms of assembly, homotrimer.

The protein resides in the cytoplasm. The catalysed reaction is a (3R)-hydroxyacyl-[ACP] + UDP-N-acetyl-alpha-D-glucosamine = a UDP-3-O-[(3R)-3-hydroxyacyl]-N-acetyl-alpha-D-glucosamine + holo-[ACP]. Its pathway is glycolipid biosynthesis; lipid IV(A) biosynthesis; lipid IV(A) from (3R)-3-hydroxytetradecanoyl-[acyl-carrier-protein] and UDP-N-acetyl-alpha-D-glucosamine: step 1/6. Functionally, involved in the biosynthesis of lipid A, a phosphorylated glycolipid that anchors the lipopolysaccharide to the outer membrane of the cell. The polypeptide is Acyl-[acyl-carrier-protein]--UDP-N-acetylglucosamine O-acyltransferase (Pseudomonas savastanoi pv. phaseolicola (strain 1448A / Race 6) (Pseudomonas syringae pv. phaseolicola (strain 1448A / Race 6))).